We begin with the raw amino-acid sequence, 522 residues long: Monogalactosyldiacylglycerol synthase, chloroplastic (522 aa).

The transit peptide at 1-98 (MSHPSTVTSE…RIPLGFSSIG (98 aa)) directs the protein to the chloroplast.

It belongs to the glycosyltransferase 28 family. In terms of assembly, homodimer. The cofactor is Zn(2+).

The protein localises to the plastid. It localises to the chloroplast inner membrane. It carries out the reaction a 1,2-diacyl-sn-glycerol + UDP-alpha-D-galactose = a 1,2-diacyl-3-O-(beta-D-galactosyl)-sn-glycerol + UDP + H(+). Its activity is regulated as follows. Inhibited by ortho-phenanthroline and UDP (competitive inhibitor relatively to UDP-Gal only) and inactivated by citraconic anhydride, tert-butoxycarbonyl-L-methionine hydrosuccinimidyl ester (SLR) and N-ethylmaleimide (NEM). In terms of biological role, involved in the synthesis of the major structural component of photosynthetic membranes. The 1,2-diacylglycerol substrate preference is 18:2/18:2 &gt; 18:0/18:1 &gt; 18:1/18:1 &gt; 18:1/16:0 &gt; 16:0/18:2 &gt; 18:3/18:3 &gt; 16:0/18:1 &gt; 16:0/16:0 &gt; 18:0/18:0. The chain is Monogalactosyldiacylglycerol synthase, chloroplastic (MGD A) from Spinacia oleracea (Spinach).